Here is a 368-residue protein sequence, read N- to C-terminus: 3-dehydroquinate synthase (368 aa).

Residues 71 to 76 (DGEAFK), 105 to 109 (GVVGD), 129 to 130 (TT), K142, K151, and 169 to 172 (TLRT) contribute to the NAD(+) site. E184, H247, and H264 together coordinate Zn(2+).

It belongs to the sugar phosphate cyclases superfamily. Dehydroquinate synthase family. Requires Co(2+) as cofactor. Zn(2+) is required as a cofactor. NAD(+) serves as cofactor.

It localises to the cytoplasm. The enzyme catalyses 7-phospho-2-dehydro-3-deoxy-D-arabino-heptonate = 3-dehydroquinate + phosphate. It participates in metabolic intermediate biosynthesis; chorismate biosynthesis; chorismate from D-erythrose 4-phosphate and phosphoenolpyruvate: step 2/7. Catalyzes the conversion of 3-deoxy-D-arabino-heptulosonate 7-phosphate (DAHP) to dehydroquinate (DHQ). This is 3-dehydroquinate synthase from Cupriavidus necator (strain ATCC 17699 / DSM 428 / KCTC 22496 / NCIMB 10442 / H16 / Stanier 337) (Ralstonia eutropha).